A 128-amino-acid polypeptide reads, in one-letter code: Small ribosomal subunit protein uS12 (128 aa).

Residue D89 is modified to 3-methylthioaspartic acid. The segment at S101–K128 is disordered. The segment covering G113–K128 has biased composition (basic residues).

The protein belongs to the universal ribosomal protein uS12 family. As to quaternary structure, part of the 30S ribosomal subunit. Contacts proteins S8 and S17. May interact with IF1 in the 30S initiation complex.

In terms of biological role, with S4 and S5 plays an important role in translational accuracy. Its function is as follows. Interacts with and stabilizes bases of the 16S rRNA that are involved in tRNA selection in the A site and with the mRNA backbone. Located at the interface of the 30S and 50S subunits, it traverses the body of the 30S subunit contacting proteins on the other side and probably holding the rRNA structure together. The combined cluster of proteins S8, S12 and S17 appears to hold together the shoulder and platform of the 30S subunit. The sequence is that of Small ribosomal subunit protein uS12 from Prosthecochloris aestuarii (strain DSM 271 / SK 413).